The sequence spans 235 residues: Segregation and condensation protein A (235 aa).

This sequence belongs to the ScpA family. Component of a cohesin-like complex composed of ScpA, ScpB and the Smc homodimer, in which ScpA and ScpB bind to the head domain of Smc. The presence of the three proteins is required for the association of the complex with DNA.

Its subcellular location is the cytoplasm. Functionally, participates in chromosomal partition during cell division. May act via the formation of a condensin-like complex containing Smc and ScpB that pull DNA away from mid-cell into both cell halves. In Streptococcus equi subsp. equi (strain 4047), this protein is Segregation and condensation protein A.